Here is a 679-residue protein sequence, read N- to C-terminus: Recombination repair protein 1 (679 aa).

Residues 1-407 (MPRVKAVKKQ…TKKAKKAETK (407 aa)) are disordered. Residues 45 to 55 (AKGKPRARKAT) show a composition bias toward basic residues. The span at 106-116 (ATAEAEPEPKV) shows a compositional bias: basic and acidic residues. Phosphothreonine occurs at positions 133 and 140. S142 is modified (phosphoserine). 2 stretches are compositionally biased toward basic and acidic residues: residues 179 to 189 (EPPKQRARKEA) and 203 to 214 (SKEKVQKAETAA). The residue at position 258 (S258) is a Phosphoserine. Residues 312 to 347 (KKEGKEPAPGKKQKKSADKENGVVEEEAKPSTETKP) show a composition bias toward basic and acidic residues. The tract at residues 428–679 (KICSWNVAGL…HCPITIFFNI (252 aa)) is AP endonuclease. Position 461 (E461) interacts with Mg(2+). Residue Y533 is part of the active site. Mg(2+) is bound by residues D572, N574, and D669. D572 serves as the catalytic Proton donor/acceptor.

This sequence belongs to the DNA repair enzymes AP/ExoA family. As to quaternary structure, interacts with the zeta DNA polymerase complex; interacts (via the N-terminus) with the accessory subunit PolZ2/Rev7 and also interacts with the catalytic component PolZ1, however the interaction with PolZ1 is likely via PolZ2. Mg(2+) serves as cofactor. It depends on Mn(2+) as a cofactor.

Its subcellular location is the nucleus. It catalyses the reaction Exonucleolytic cleavage in the 3'- to 5'-direction to yield nucleoside 5'-phosphates.. Plays a role in the cellular response to oxidative stress by promoting DNA repair mechanisms such as base excision repair and possibly homologous recombination repair. Functions as an apurinic/apyrimidinic (AP) endodeoxyribonuclease in the DNA base excision repair (BER) pathway of DNA lesions induced by oxidative and alkylating agents. Likely to initiate repair of AP sites in DNA by catalyzing hydrolytic incision of the phosphodiester backbone immediately adjacent to the damage, generating a single-strand break with 5'-deoxyribose phosphate and 3'-hydroxyl ends. Has a 3'-5' exoribonuclease activity on mismatched deoxyribonucleotides at the 3' termini of nicked or gapped DNA molecules during short-patch BER. Has apurinic endonuclease and double-stranded DNA 3'-exonuclease activities and carries out single-stranded DNA renaturation in a Mg(2+)-dependent manner. Activity is more efficient in purine-rich regions of dsDNA than in pyrimidine-rich regions. The sequence is that of Recombination repair protein 1 from Drosophila melanogaster (Fruit fly).